We begin with the raw amino-acid sequence, 277 residues long: Putative phosphoenolpyruvate synthase regulatory protein (277 aa).

Residue 157 to 164 coordinates ADP; sequence GVSRSGKT.

It belongs to the pyruvate, phosphate/water dikinase regulatory protein family. PSRP subfamily.

The enzyme catalyses [pyruvate, water dikinase] + ADP = [pyruvate, water dikinase]-phosphate + AMP + H(+). It carries out the reaction [pyruvate, water dikinase]-phosphate + phosphate + H(+) = [pyruvate, water dikinase] + diphosphate. Functionally, bifunctional serine/threonine kinase and phosphorylase involved in the regulation of the phosphoenolpyruvate synthase (PEPS) by catalyzing its phosphorylation/dephosphorylation. The sequence is that of Putative phosphoenolpyruvate synthase regulatory protein from Aromatoleum aromaticum (strain DSM 19018 / LMG 30748 / EbN1) (Azoarcus sp. (strain EbN1)).